The sequence spans 464 residues: Argininosuccinate lyase (464 aa).

It belongs to the lyase 1 family. Argininosuccinate lyase subfamily.

The protein resides in the cytoplasm. The catalysed reaction is 2-(N(omega)-L-arginino)succinate = fumarate + L-arginine. It participates in amino-acid biosynthesis; L-arginine biosynthesis; L-arginine from L-ornithine and carbamoyl phosphate: step 3/3. This chain is Argininosuccinate lyase, found in Stutzerimonas stutzeri (strain A1501) (Pseudomonas stutzeri).